The sequence spans 285 residues: Mediator of RNA polymerase II transcription subunit 4 (285 aa).

Over residues 1–13 (MSTPGPVPSSTSV) the composition is skewed to low complexity. The disordered stretch occupies residues 1-25 (MSTPGPVPSSTSVATLPFSAQDKTQ). Positions 31–115 (ELQSVGIYQD…TREILETLNT (85 aa)) form a coiled coil. Residues 206 to 285 (DNVNNDNNTS…DLDLFNPDEF (80 aa)) form a disordered region. Basic and acidic residues-rich tracts occupy residues 216-250 (KIDE…RRGS) and 257-267 (GKEDSETKSEE). Residues 268–285 (NPDLELDLDLDLFNPDEF) are compositionally biased toward acidic residues.

Belongs to the Mediator complex subunit 4 family. As to quaternary structure, component of the Mediator complex.

Its subcellular location is the nucleus. Its function is as follows. Component of the Mediator complex, a coactivator involved in the regulated transcription of nearly all RNA polymerase II-dependent genes. Mediator functions as a bridge to convey information from gene-specific regulatory proteins to the basal RNA polymerase II transcription machinery. Mediator is recruited to promoters by direct interactions with regulatory proteins and serves as a scaffold for the assembly of a functional preinitiation complex with RNA polymerase II and the general transcription factors. This is Mediator of RNA polymerase II transcription subunit 4 (MED4) from Kluyveromyces lactis (strain ATCC 8585 / CBS 2359 / DSM 70799 / NBRC 1267 / NRRL Y-1140 / WM37) (Yeast).